The chain runs to 244 residues: Small ribosomal subunit protein uS2 (244 aa).

The protein belongs to the universal ribosomal protein uS2 family.

The chain is Small ribosomal subunit protein uS2 from Buchnera aphidicola subsp. Acyrthosiphon pisum (strain 5A).